The primary structure comprises 361 residues: sn-glycerol-3-phosphate import ATP-binding protein UgpC (361 aa).

One can recognise an ABC transporter domain in the interval 4–235; that stretch reads LSFRNLKKTY…PASTFVAGFI (232 aa). 37–44 provides a ligand contact to ATP; the sequence is GPSGCGKS.

Belongs to the ABC transporter superfamily. sn-glycerol-3-phosphate importer (TC 3.A.1.1.3) family. In terms of assembly, the complex is composed of two ATP-binding proteins (UgpC), two transmembrane proteins (UgpA and UgpE) and a solute-binding protein (UgpB).

The protein localises to the cell inner membrane. It carries out the reaction sn-glycerol 3-phosphate(out) + ATP + H2O = sn-glycerol 3-phosphate(in) + ADP + phosphate + H(+). Functionally, part of the ABC transporter complex UgpBAEC involved in sn-glycerol-3-phosphate (G3P) import. Responsible for energy coupling to the transport system. This Bordetella avium (strain 197N) protein is sn-glycerol-3-phosphate import ATP-binding protein UgpC.